Here is a 546-residue protein sequence, read N- to C-terminus: Glucose-6-phosphate isomerase (546 aa).

The active-site Proton donor is Glu-358. Residues His-389 and Lys-504 contribute to the active site.

The protein belongs to the GPI family.

Its subcellular location is the cytoplasm. The enzyme catalyses alpha-D-glucose 6-phosphate = beta-D-fructose 6-phosphate. The protein operates within carbohydrate biosynthesis; gluconeogenesis. It functions in the pathway carbohydrate degradation; glycolysis; D-glyceraldehyde 3-phosphate and glycerone phosphate from D-glucose: step 2/4. In terms of biological role, catalyzes the reversible isomerization of glucose-6-phosphate to fructose-6-phosphate. This chain is Glucose-6-phosphate isomerase, found in Desulfosudis oleivorans (strain DSM 6200 / JCM 39069 / Hxd3) (Desulfococcus oleovorans).